The primary structure comprises 530 residues: UDP-glucuronosyltransferase 2B7 (530 aa).

Positions 1 to 17 (MPQKWISALLLLQISFC) are cleaved as a signal peptide. The N-linked (GlcNAc...) asparagine glycan is linked to Asn316. Residues 374–380 (THGGANG) and Glu400 each bind UDP-alpha-D-glucuronate. The chain crosses the membrane as a helical span at residues 496-516 (IGFLLACVLAIVLLAVKCCLF).

The protein belongs to the UDP-glycosyltransferase family.

It localises to the endoplasmic reticulum membrane. The enzyme catalyses glucuronate acceptor + UDP-alpha-D-glucuronate = acceptor beta-D-glucuronoside + UDP + H(+). The catalysed reaction is 17alpha-estradiol + UDP-alpha-D-glucuronate = 17alpha-estradiol 17-O-(beta-D-glucuronate) + UDP + H(+). It carries out the reaction 17beta-estradiol + UDP-alpha-D-glucuronate = 17beta-estradiol 17-O-(beta-D-glucuronate) + UDP + H(+). It catalyses the reaction 2-hydroxy-17beta-estradiol + UDP-alpha-D-glucuronate = 2-hydroxy-17beta-estradiol 3-O-(beta-D-glucuronate) + UDP + H(+). The enzyme catalyses 4-hydroxy-17beta-estradiol + UDP-alpha-D-glucuronate = 17beta-estradiol 4-O-(beta-D-glucuronate) + UDP + H(+). The catalysed reaction is 4-hydroxyestrone + UDP-alpha-D-glucuronate = estrone 4-O-(beta-D-glucuronate) + UDP + H(+). It carries out the reaction 16alpha-hydroxyestrone + UDP-alpha-D-glucuronate = 16alpha-hydroxyestrone 16-O-(beta-D-glucuronate) + UDP + H(+). It catalyses the reaction 16alpha,17beta-estriol + UDP-alpha-D-glucuronate = 16alpha,17beta-estriol 16-O-(beta-D-glucuronate) + UDP + H(+). The enzyme catalyses 16beta,17beta-estriol + UDP-alpha-D-glucuronate = 16beta,17beta-estriol 16-O-(beta-D-glucuronate) + UDP + H(+). The catalysed reaction is 16alpha,17alpha-estriol + UDP-alpha-D-glucuronate = 16alpha,17alpha-estriol 16-O-(beta-D-glucuronate) + UDP + H(+). It carries out the reaction 16alpha,17alpha-estriol + UDP-alpha-D-glucuronate = 16alpha,17alpha-estriol 17-O-(beta-D-glucuronate) + UDP + H(+). It catalyses the reaction epitestosterone + UDP-alpha-D-glucuronate = epitestosterone 17-O-(beta-D-glucuronate) + UDP + H(+). The enzyme catalyses hyodeoxycholate + UDP-alpha-D-glucuronate = hyodeoxycholate 6-O-(beta-D-glucuronate) + UDP + H(+). The catalysed reaction is hyocholate + UDP-alpha-D-glucuronate = hyocholate 6-O-(beta-D-glucuronate) + UDP + H(+). It carries out the reaction all-trans-retinoate + UDP-alpha-D-glucuronate = all-trans-retinoyl-1-O-(beta-D-glucuronate) + UDP. It catalyses the reaction all-trans-4-hydroxyretinoate + UDP-alpha-D-glucuronate = all-trans-4-hydroxy-4-O-(beta-D-glucuronide)-retinoate + UDP + H(+). The enzyme catalyses (E)-ferulate + UDP-alpha-D-glucuronate = (E)-ferulic acid beta-D-glucuronate ester + UDP. The catalysed reaction is 8-iso-prostaglandin F2alpha + UDP-alpha-D-glucuronate = 8-iso-prostaglandin F2alpha-glucuronide + UDP + H(+). It carries out the reaction 5-epi-5-F2t-IsoP + UDP-alpha-D-glucuronate = 5-epi-5-F2t-IsoP-glucuronide + UDP + H(+). It catalyses the reaction (5Z,8Z,11Z,14Z)-eicosatetraenoate + UDP-alpha-D-glucuronate = O-[(5Z),(8Z),(11Z),(14Z)-eicosatetraenoyl]-beta-D-glucuronate + UDP. The enzyme catalyses 15-hydroxy-(5Z,8Z,11Z,13E)-eicosatetraenoate + UDP-alpha-D-glucuronate = 15-O-(beta-D-glucuronosyl)-(5Z,8Z,11Z,14Z)-eicosatetraenoate + UDP + H(+). The catalysed reaction is 20-hydroxy-(5Z,8Z,11Z,14Z)-eicosatetraenoate + UDP-alpha-D-glucuronate = 20-O-(beta-D-glucuronosyl)-(5Z,8Z,11Z,14Z)-eicosatetraenoate + UDP + H(+). It carries out the reaction (E)-ferulate + UDP-alpha-D-glucuronate = (E)-4-O-(beta-D-glucuronosyl)-ferulate + UDP + H(+). It catalyses the reaction prostaglandin B1 + UDP-alpha-D-glucuronate = 15-O-(beta-D-glucuronosyl)-prostaglandin B1 + UDP + H(+). The enzyme catalyses mycophenolate + UDP-alpha-D-glucuronate = mycophenolic acid O-acyl-beta-D-glucuronide + UDP. The catalysed reaction is losartan + UDP-alpha-D-glucuronate = losartan-2-N-beta-D-glucuronide + UDP. It carries out the reaction candesartan + UDP-alpha-D-glucuronate = candesartan O-beta-D-glucuronoside + UDP. It catalyses the reaction candesartan + UDP-alpha-D-glucuronate = candesartan-2-N-beta-D-glucuronide + UDP. The enzyme catalyses zolasartan + UDP-alpha-D-glucuronate = zolarsartan O-beta-D-glucuronoside + UDP. In terms of biological role, UDP-glucuronosyltransferase (UGT) that catalyzes phase II biotransformation reactions in which lipophilic substrates are conjugated with glucuronic acid to increase the metabolite's water solubility, thereby facilitating excretion into either the urine or bile. Essential for the elimination and detoxification of drugs, xenobiotics and endogenous compounds. Catalyzes the glucuronidation of endogenous steroid hormones such as androgens (epitestosterone, androsterone) and estrogens (estradiol, epiestradiol, estriol, catechol estrogens). Also regulates the levels of retinoic acid, a major metabolite of vitamin A involved in apoptosis, cellular growth and differentiation, and embryonic development. Contributes to bile acid (BA) detoxification by catalyzing the glucuronidation of BA substrates, which are natural detergents for dietary lipids absorption. Involved in the glucuronidation of arachidonic acid (AA) and AA-derived eicosanoids including 15-HETE, 20-HETE, PGE2, PGB1 and F2-isoprostanes (8-iso-PGF2alpha and 5-epi-5-F2t-IsoP). Involved in the glucuronidation of the phytochemical ferulic acid at the phenolic or the carboxylic acid group. Involved in the glucuronidation of the AGTR1 angiotensin receptor antagonist losartan, caderastan and zolarsatan, drugs which can inhibit the effect of angiotensin II. Also metabolizes mycophenolate, an immunosuppressive agent. This chain is UDP-glucuronosyltransferase 2B7, found in Rattus norvegicus (Rat).